We begin with the raw amino-acid sequence, 87 residues long: Alpha-toxin To2 (87 aa).

The signal sequence occupies residues 1 to 20 (MIRFVLFISCFFLIGTVVEC). One can recognise an LCN-type CS-alpha/beta domain in the interval 22–84 (KDGYLMEGDG…IWDSKNNKCG (63 aa)). Disulfide bonds link Cys32–Cys83, Cys36–Cys58, Cys44–Cys64, and Cys48–Cys66. Lys85 carries the post-translational modification Lysine amide.

In terms of tissue distribution, expressed by the venom gland.

It is found in the secreted. Functionally, alpha toxins bind voltage-independently at site-3 of sodium channels (Nav) and inhibit the inactivation of the activated channels, thereby blocking neuronal transmission. Affects the tetrodotoxin-sensitive sodium current permeability of F-11 rat neuroblastoma cells. Produces a dose dependent increase in amplitude and duration of the current. This Tityus obscurus (Amazonian scorpion) protein is Alpha-toxin To2.